We begin with the raw amino-acid sequence, 220 residues long: Glutathione S-transferase (220 aa).

The GST N-terminal domain occupies 1–77 (MLKLHGFSVS…YIEQTQSGKA (77 aa)). Residues Y12, V49, and 61–62 (ET) each bind glutathione. A GST C-terminal domain is found at 82-211 (DPFEQAKVRE…ADKEASMPAF (130 aa)).

This sequence belongs to the GST superfamily. Monomer and homodimer.

Its subcellular location is the cytoplasm. The catalysed reaction is RX + glutathione = an S-substituted glutathione + a halide anion + H(+). In terms of biological role, conjugation of reduced glutathione to a wide number of exogenous and endogenous hydrophobic electrophiles. The protein is Glutathione S-transferase of Pseudomonas putida (strain ATCC 700007 / DSM 6899 / JCM 31910 / BCRC 17059 / LMG 24140 / F1).